The chain runs to 370 residues: Putative phosphoserine aminotransferase (370 aa).

The tract at residues 1–22 (MAELTIPADLKPRDGRFGSGPS) is disordered. Arg44 is a binding site for L-glutamate. Pyridoxal 5'-phosphate contacts are provided by Phe102, Thr148, Asp170, and Gln193. Lys194 is modified (N6-(pyridoxal phosphate)lysine). A pyridoxal 5'-phosphate-binding site is contributed by 245 to 246 (NT).

Belongs to the class-V pyridoxal-phosphate-dependent aminotransferase family. SerC subfamily. In terms of assembly, homodimer. Pyridoxal 5'-phosphate is required as a cofactor.

It localises to the cytoplasm. It carries out the reaction O-phospho-L-serine + 2-oxoglutarate = 3-phosphooxypyruvate + L-glutamate. The enzyme catalyses 4-(phosphooxy)-L-threonine + 2-oxoglutarate = (R)-3-hydroxy-2-oxo-4-phosphooxybutanoate + L-glutamate. It functions in the pathway amino-acid biosynthesis; L-serine biosynthesis; L-serine from 3-phospho-D-glycerate: step 2/3. The protein operates within cofactor biosynthesis; pyridoxine 5'-phosphate biosynthesis; pyridoxine 5'-phosphate from D-erythrose 4-phosphate: step 3/5. Catalyzes the reversible conversion of 3-phosphohydroxypyruvate to phosphoserine and of 3-hydroxy-2-oxo-4-phosphonooxybutanoate to phosphohydroxythreonine. This is Putative phosphoserine aminotransferase from Mycobacterium sp. (strain JLS).